Consider the following 343-residue polypeptide: Dimethyladenosine transferase 1, mitochondrial (343 aa).

Residues 28-31 (QNFL), Asn29, Leu31, Gly56, Glu78, Asp133, and Asn169 each bind S-adenosyl-L-methionine.

It belongs to the class I-like SAM-binding methyltransferase superfamily. rRNA adenine N(6)-methyltransferase family. KsgA subfamily.

It is found in the mitochondrion. Functionally, probable S-adenosyl-L-methionine-dependent methyltransferase which specifically dimethylates mitochondrial 12S rRNA at the conserved stem loop. Also required for basal transcription of mitochondrial DNA. Stimulates transcription independently of the methyltransferase activity. In Vermamoeba vermiformis (Amoeba), this protein is Dimethyladenosine transferase 1, mitochondrial.